Consider the following 101-residue polypeptide: NADH-quinone oxidoreductase subunit K (101 aa).

Helical transmembrane passes span 4-24 (LAHYLVLGAILFAMSIVGIFL), 29-49 (IIIILMAIELMLLAVNTNFVA), and 61-81 (IFVFFVLTVAAAEAAIGLAIL).

The protein belongs to the complex I subunit 4L family. As to quaternary structure, NDH-1 is composed of 14 different subunits. Subunits NuoA, H, J, K, L, M, N constitute the membrane sector of the complex.

The protein localises to the cell inner membrane. The catalysed reaction is a quinone + NADH + 5 H(+)(in) = a quinol + NAD(+) + 4 H(+)(out). NDH-1 shuttles electrons from NADH, via FMN and iron-sulfur (Fe-S) centers, to quinones in the respiratory chain. The immediate electron acceptor for the enzyme in this species is believed to be ubiquinone. Couples the redox reaction to proton translocation (for every two electrons transferred, four hydrogen ions are translocated across the cytoplasmic membrane), and thus conserves the redox energy in a proton gradient. This is NADH-quinone oxidoreductase subunit K from Burkholderia vietnamiensis (strain G4 / LMG 22486) (Burkholderia cepacia (strain R1808)).